The following is a 167-amino-acid chain: UPF0178 protein bll3966 (167 aa).

This sequence belongs to the UPF0178 family.

This chain is UPF0178 protein bll3966, found in Bradyrhizobium diazoefficiens (strain JCM 10833 / BCRC 13528 / IAM 13628 / NBRC 14792 / USDA 110).